The chain runs to 467 residues: ATP-dependent protease ATPase subunit HslU (467 aa).

ATP contacts are provided by residues I20, 62–67 (GVGKTE), D280, E345, and R417.

The protein belongs to the ClpX chaperone family. HslU subfamily. In terms of assembly, a double ring-shaped homohexamer of HslV is capped on each side by a ring-shaped HslU homohexamer. The assembly of the HslU/HslV complex is dependent on binding of ATP.

Its subcellular location is the cytoplasm. In terms of biological role, ATPase subunit of a proteasome-like degradation complex; this subunit has chaperone activity. The binding of ATP and its subsequent hydrolysis by HslU are essential for unfolding of protein substrates subsequently hydrolyzed by HslV. HslU recognizes the N-terminal part of its protein substrates and unfolds these before they are guided to HslV for hydrolysis. This Ligilactobacillus salivarius (strain UCC118) (Lactobacillus salivarius) protein is ATP-dependent protease ATPase subunit HslU.